The chain runs to 303 residues: Coenzyme PQQ synthesis protein B (303 aa).

The protein belongs to the PqqB family.

Its pathway is cofactor biosynthesis; pyrroloquinoline quinone biosynthesis. Functionally, may be involved in the transport of PQQ or its precursor to the periplasm. This chain is Coenzyme PQQ synthesis protein B, found in Acinetobacter baumannii (strain ACICU).